Here is a 125-residue protein sequence, read N- to C-terminus: Protein ApaG (125 aa).

Residues 1-125 (MINSPRVCIQ…FRLAVPTLIH (125 aa)) form the ApaG domain.

The polypeptide is Protein ApaG (Citrobacter koseri (strain ATCC BAA-895 / CDC 4225-83 / SGSC4696)).